The following is a 458-amino-acid chain: Argininosuccinate lyase (458 aa).

It belongs to the lyase 1 family. Argininosuccinate lyase subfamily.

The protein localises to the cytoplasm. The enzyme catalyses 2-(N(omega)-L-arginino)succinate = fumarate + L-arginine. It functions in the pathway amino-acid biosynthesis; L-arginine biosynthesis; L-arginine from L-ornithine and carbamoyl phosphate: step 3/3. The protein is Argininosuccinate lyase of Neisseria gonorrhoeae (strain ATCC 700825 / FA 1090).